The sequence spans 317 residues: Beta-ketoacyl-[acyl-carrier-protein] synthase III (317 aa).

Catalysis depends on residues Cys112 and His244. An ACP-binding region spans residues 245 to 249 (QANLR). The active site involves Asn274.

Belongs to the thiolase-like superfamily. FabH family. In terms of assembly, homodimer.

The protein localises to the cytoplasm. The catalysed reaction is malonyl-[ACP] + acetyl-CoA + H(+) = 3-oxobutanoyl-[ACP] + CO2 + CoA. Its pathway is lipid metabolism; fatty acid biosynthesis. In terms of biological role, catalyzes the condensation reaction of fatty acid synthesis by the addition to an acyl acceptor of two carbons from malonyl-ACP. Catalyzes the first condensation reaction which initiates fatty acid synthesis and may therefore play a role in governing the total rate of fatty acid production. Possesses both acetoacetyl-ACP synthase and acetyl transacylase activities. Its substrate specificity determines the biosynthesis of branched-chain and/or straight-chain of fatty acids. This is Beta-ketoacyl-[acyl-carrier-protein] synthase III from Shigella sonnei (strain Ss046).